The primary structure comprises 155 residues: S-ribosylhomocysteine lyase (155 aa).

Residues histidine 58, histidine 62, and cysteine 125 each coordinate Fe cation.

It belongs to the LuxS family. As to quaternary structure, homodimer. It depends on Fe cation as a cofactor.

It catalyses the reaction S-(5-deoxy-D-ribos-5-yl)-L-homocysteine = (S)-4,5-dihydroxypentane-2,3-dione + L-homocysteine. Its function is as follows. Involved in the synthesis of autoinducer 2 (AI-2) which is secreted by bacteria and is used to communicate both the cell density and the metabolic potential of the environment. The regulation of gene expression in response to changes in cell density is called quorum sensing. Catalyzes the transformation of S-ribosylhomocysteine (RHC) to homocysteine (HC) and 4,5-dihydroxy-2,3-pentadione (DPD). The protein is S-ribosylhomocysteine lyase of Helicobacter pylori (strain HPAG1).